We begin with the raw amino-acid sequence, 1614 residues long: MSARRQELQDRAIVKIAAHLPDLIVYGDFSPERPSVKCFDGVLMFVDISGFTAMTEKFSTAMYMDRGAEQLVEILNYYISAIVEKVLIFGGDILKFAGDALLALWKVERKQLKNIITVVIKCSLEIHGLFEAKEAEEGLDIRVKIGLAAGHITMLVFGDETRNYFLVIGQAVDDVRLAQNMAQMNDVILSPNCWQLCDRSMIEIERIPDQRAVKVSFLKPPPTFNFDEFFTKCMGFMDYYPSGDHKNFLRLACMLESDPELELSLQKYVMEIILKQIDDKQLRGYLSELRPVTIVFVNLMFKEQDKVEVIGSAIQAACVHITSVLKVFRGQINKVFMFDKGCSFLCVFGFPGEKAPDEITHALESAVDIFDFCSQVHKIRTVSIGVASGIVFCGIVGHTVRHEYTVIGQKVNIAARMMMYYPGIVSCDSVTYDGSNLPAYFFKELPKKVMKGVADPGPVYQCLGLNEKVMFGMAYLICNRYEGYPLLGRVREIDYFMSTMKDFLMTNCSRVLMYEGLPGYGKSQVLMEIEYLASQHENHRAVAIALTKISFHQNFYTIQILMANVLGLDTCKHYKERQTNLQNRVKTLLDEKFHCLLNDIFHVQFPVSREMSRMSKIRKQKQLEALFMKILAQTVREERIIFIIDEAQFVDGTSWAFIEKLIRSMPIFIVMSLAPFSEVPCAAANAIMKNRNTTYITLGTMQPQEIRDKVCVDLSVSSIPRELDSYLVEGSCGIPYYCEELLKNLDHHRVLLFQQAETEQKTNVTWNNMFKHSVRPTDDMQLFTSISEGQKEVCYLVSGVRLNNLSPPASLKEISLVQLDSMSLSHQMLVRCAAIIGLTFTTELLFEILPCWNMKMMIKALATLVESNVFNCFRSSKDLQLALKQNVPTFEVHYRSLALKLKEGLTYGEEEELREMEGEVVECRILRFCRPIMQKTAYELWLKDQKKVLHLKCARFLEESAHRCNHCRNVDFIPYHHFIVDIRLNTLDMDTVKRMVTSQGFKIDEEEAIFSKSELPRKYKFPENLSITEIREKILHFFDNVILKMKSSPNDIIPLESCQCKELLQIVILPLAQHFVALEENNKALYYFLELASAYLILGDNYNAYMYLGEGERLLKSLTNEDSWSQTFEYATFYSLKAEVCFNMGQMVLAKKMLRKALKLLNRMFPCNLLTLTFQMHVEKNRLSHFMNQHTQEGSVPGKKLAQLYLQASCFSLLWRIYSLNFFFHYKYYGHLAAMMEMNTSLETQNDFQIIKAYLDFSLYHHLAGYQGVWFKYEILVMEQLLNLPLKGEAIEIMAYTADTLGHIKFLMGHLDLAIELGSRAHRMWSLLRNPNKYQMVLCRLSKPLFLKSRYKHLVQVLGWLWDLSVTEEDIFSKAFFYFVCLDIMLYSGFIYRTFEECLEFIHHNEDNRILKFQSGLLLGLYSCIAVWYARLQEWDNFNKFSDRAKHLVTRRTPTVLYYEGISRYMEGQVLHLQKQIEEQAENAQDSGVEILKALETLVAQNTTGPVFYPRLYHLMAYVCILMGDGHSCDFFLNTALELSETHGNLLEKCWLSMSKEWWYSASELTGDQWLQTVLSLPSWDKIVSGKGGQRKRSWSWFCPPNFSMVSWSQPQCA.

2 Guanylate cyclase domains span residues 42–179 and 293–418; these read VLMF…RLAQ and TIVF…ARMM. Mg(2+) is bound by residues Asp47 and Ile48. Position 47–52 (47–52) interacts with ATP; that stretch reads DISGFT. Residue Lys95 coordinates hydrogencarbonate. Asp99 serves as a coordination point for Mg(2+). ATP contacts are provided by Asp99 and Lys144. Hydrogencarbonate contacts are provided by Val167, Arg176, and Met337. ATP-binding positions include Val406 and 412–416; that span reads NIAAR.

The protein belongs to the adenylyl cyclase class-4/guanylyl cyclase family. Requires Mg(2+) as cofactor. It depends on Mn(2+) as a cofactor. In terms of tissue distribution, expressed in testis.

The protein localises to the cell membrane. Its subcellular location is the cytoplasm. The protein resides in the cytoskeleton. It localises to the perinuclear region. It is found in the nucleus. The protein localises to the cell projection. Its subcellular location is the cilium. The protein resides in the mitochondrion. The enzyme catalyses ATP = 3',5'-cyclic AMP + diphosphate. Its activity is regulated as follows. Activated by manganese or magnesium ions. In the presence of magnesium ions, the enzyme is activated by bicarbonate. Calcium mildly increases the enzyme activity, also in the presence of magnesium ions. Functionally, catalyzes the formation of the signaling molecule cAMP. May function as sensor that mediates responses to changes in cellular bicarbonate and CO(2) levels. Has a critical role in mammalian spermatogenesis by producing the cAMP which regulates cAMP-responsive nuclear factors indispensable for sperm maturation in the epididymis. Induces capacitation, the maturational process that sperm undergo prior to fertilization. Involved in ciliary beat regulation. This Mus musculus (Mouse) protein is Adenylate cyclase type 10 (Adcy10).